Here is a 407-residue protein sequence, read N- to C-terminus: Na(+)-translocating NADH-quinone reductase subunit F (407 aa).

The helical transmembrane segment at 3–23 threads the bilayer; that stretch reads IILGVVMFTLIVLVLSGLILA. The 95-residue stretch at 32 to 126 folds into the 2Fe-2S ferredoxin-type domain; that stretch reads GDVVIEINNE…NMKIELPEEI (95 aa). The [2Fe-2S] cluster site is built by Cys69, Cys75, Cys78, and Cys110. The FAD-binding FR-type domain maps to 129 to 269; the sequence is VKKWECEVIS…SGPFGEFFAK (141 aa).

This sequence belongs to the NqrF family. In terms of assembly, composed of six subunits; NqrA, NqrB, NqrC, NqrD, NqrE and NqrF. [2Fe-2S] cluster is required as a cofactor. The cofactor is FAD.

It localises to the cell inner membrane. It carries out the reaction a ubiquinone + n Na(+)(in) + NADH + H(+) = a ubiquinol + n Na(+)(out) + NAD(+). Its function is as follows. NQR complex catalyzes the reduction of ubiquinone-1 to ubiquinol by two successive reactions, coupled with the transport of Na(+) ions from the cytoplasm to the periplasm. The first step is catalyzed by NqrF, which accepts electrons from NADH and reduces ubiquinone-1 to ubisemiquinone by a one-electron transfer pathway. This chain is Na(+)-translocating NADH-quinone reductase subunit F, found in Klebsiella pneumoniae subsp. pneumoniae (strain ATCC 700721 / MGH 78578).